Here is a 271-residue protein sequence, read N- to C-terminus: Ferric vulnibactin reductase VuuB (271 aa).

The FAD-binding FR-type domain occupies 8-131 (VYPMLLDFVR…IGPAGPDPLI (124 aa)).

Belongs to the SIP oxidoreductase family. As to quaternary structure, monomer. Requires FAD as cofactor.

It localises to the cytoplasm. It carries out the reaction 2 a Fe(II)-siderophore + NAD(+) + H(+) = 2 a Fe(III)-siderophore + NADH. Its function is as follows. Ferric-siderophore reductase involved in iron removal from the siderophores after their transport into the cell. Acts as a major ferric-vulnibactin reductase catalyzing the reduction of Fe(3+)-vulnibactin, a catecholate siderophore synthesized by V.vulnificus. Catalyzes reduction of Fe(3+)-aerobactin, a citrate-hydroxamate siderophore produced by other bacteria, in the absence of IutB. Catalyzes reduction of Fe(3+)-vibriobactin in vitro. No activity with ferrioxamine B or Fe(3+)-enterobactin. Catalyzes reduction of ferric chelating compounds Fe(3+)-nitrilotriacetic acid (NTA), Fe(3+)-citrate and Fe(3+)-EDTA as well as non-complexed FeCl3 in the presence of NADH as its electron donor and FAD as its cofactor in vitro. Highest activity with Fe(3+)-NTA as electron acceptor. The chain is Ferric vulnibactin reductase VuuB from Vibrio vulnificus.